Here is a 711-residue protein sequence, read N- to C-terminus: Acyl-CoA dehydrogenase FadE34 (711 aa).

Belongs to the acyl-CoA dehydrogenase family. In terms of assembly, homodimer. FAD is required as a cofactor.

It catalyses the reaction 3-oxochol-4-en-24-oyl-CoA + A = (22E)-3-oxochola-4,22-dien-24-oyl-CoA + AH2. The catalysed reaction is 3beta-hydroxy-chol-5-ene-24-oyl-CoA + A = 3beta-hydroxy-chol-5,22-dien-24-oyl-CoA + AH2. Its pathway is steroid metabolism; cholesterol degradation. Its function is as follows. Involved in the second cycle of side chain dehydrogenation in the beta-oxidation of cholesterol catabolism. It contributes partly to the virulence by increasing the efficiency of beta-oxidation. Catalyzes the dehydrogenation of the five-carbon steroid side chain of 3-oxo-chol-4-en-24-oyl-CoA (3-OCO-CoA) to yield 3-oxochol-4,22-dien-24-oyl-CoA. Can also use 3beta-hydroxy-chol-5-ene-24-oyl-CoA, and shows weak activity with cholyl-CoA and deoxycholyl-CoA. In Mycobacterium tuberculosis (strain ATCC 25618 / H37Rv), this protein is Acyl-CoA dehydrogenase FadE34 (fadE34).